Reading from the N-terminus, the 413-residue chain is Gamma-glutamyl phosphate reductase (413 aa).

This sequence belongs to the gamma-glutamyl phosphate reductase family.

Its subcellular location is the cytoplasm. It carries out the reaction L-glutamate 5-semialdehyde + phosphate + NADP(+) = L-glutamyl 5-phosphate + NADPH + H(+). It functions in the pathway amino-acid biosynthesis; L-proline biosynthesis; L-glutamate 5-semialdehyde from L-glutamate: step 2/2. Catalyzes the NADPH-dependent reduction of L-glutamate 5-phosphate into L-glutamate 5-semialdehyde and phosphate. The product spontaneously undergoes cyclization to form 1-pyrroline-5-carboxylate. In Anoxybacillus flavithermus (strain DSM 21510 / WK1), this protein is Gamma-glutamyl phosphate reductase.